Here is a 349-residue protein sequence, read N- to C-terminus: [LysW]-L-2-aminoadipate/[LysW]-L-glutamate phosphate reductase (349 aa).

10-13 (SGYT) contributes to the NADP(+) binding site. Residue cysteine 150 is part of the active site. Asparagine 316 lines the NADP(+) pocket.

The protein belongs to the NAGSA dehydrogenase family. Type 1 subfamily. LysY sub-subfamily.

The protein localises to the cytoplasm. It catalyses the reaction [amino-group carrier protein]-C-terminal-N-(1-carboxy-5-oxopentan-1-yl)-L-glutamine + phosphate + NADP(+) = [amino-group carrier protein]-C-terminal-N-(1-carboxy-5-phosphooxy-5-oxopentan-1-yl)-L-glutamine + NADPH + H(+). The catalysed reaction is [amino-group carrier protein]-C-terminal-gamma-(L-glutamyl-5-semialdehyde)-L-glutamate + phosphate + NADP(+) = [amino-group carrier protein]-C-terminal-gamma-(5-phospho-L-glutamyl)-L-glutamate + NADPH + H(+). The protein operates within amino-acid biosynthesis; L-lysine biosynthesis via AAA pathway; L-lysine from L-alpha-aminoadipate (Thermus route): step 3/5. It participates in amino-acid biosynthesis; L-arginine biosynthesis. Its function is as follows. Involved in both the arginine and lysine biosynthetic pathways. This Sulfurisphaera tokodaii (strain DSM 16993 / JCM 10545 / NBRC 100140 / 7) (Sulfolobus tokodaii) protein is [LysW]-L-2-aminoadipate/[LysW]-L-glutamate phosphate reductase.